Here is a 215-residue protein sequence, read N- to C-terminus: Probable transaldolase (215 aa).

The active-site Schiff-base intermediate with substrate is K83.

Belongs to the transaldolase family. Type 3B subfamily.

It is found in the cytoplasm. The enzyme catalyses D-sedoheptulose 7-phosphate + D-glyceraldehyde 3-phosphate = D-erythrose 4-phosphate + beta-D-fructose 6-phosphate. It participates in carbohydrate degradation; pentose phosphate pathway; D-glyceraldehyde 3-phosphate and beta-D-fructose 6-phosphate from D-ribose 5-phosphate and D-xylulose 5-phosphate (non-oxidative stage): step 2/3. Its function is as follows. Transaldolase is important for the balance of metabolites in the pentose-phosphate pathway. The sequence is that of Probable transaldolase from Bdellovibrio bacteriovorus (strain ATCC 15356 / DSM 50701 / NCIMB 9529 / HD100).